Here is an 814-residue protein sequence, read N- to C-terminus: Probable G-protein coupled receptor 156 (814 aa).

The Extracellular portion of the chain corresponds to 1–47; sequence MEPEINCSELCDSFPGQELDRRPLHDLCKTTITSSHHSSKTISSLSP. N-linked (GlcNAc...) asparagine glycosylation is present at Asn-6. Residues 48–68 form a helical membrane-spanning segment; the sequence is VLLGIVWTFLSCGLLLILFFL. Topologically, residues 69–86 are cytoplasmic; that stretch reads AFTIHCRKNRIVKMSSPN. Residues 87 to 107 traverse the membrane as a helical segment; the sequence is LNIVTLLGSCLTYSSAYLFGI. Topologically, residues 108–118 are extracellular; the sequence is QDVLVGSSMET. The helical transmembrane segment at 119-139 threads the bilayer; that stretch reads LIQTRLSMLCIGTSLVFGPIL. Residues 140 to 164 are Cytoplasmic-facing; sequence GKSWRLYKVFTQRVPDKRVIIKDLQ. The chain crosses the membrane as a helical span at residues 165–185; sequence LLGLVAALLMADVILLMTWVL. At 186 to 222 the chain is on the extracellular side; sequence TDPIQCLQILSVSMTVTGKDVSCTSTSTHFCASRYSD. Residues 223-243 form a helical membrane-spanning segment; that stretch reads VWIALIWGCKGLLLLYGAYLA. Residues 244–257 lie on the Cytoplasmic side of the membrane; it reads GLTGHVSSPPVNQS. The helical transmembrane segment at 258–278 threads the bilayer; the sequence is LTIMVGVNLLVLAAGLLFVVT. Residues 279-288 are Extracellular-facing; it reads RYLHSWPNLV. A helical transmembrane segment spans residues 289 to 309; sequence FGLTSGGIFVCTTTINCFIFI. Over 310-814 the chain is Cytoplasmic; it reads PQLKQWKAFE…FKDDLKPTLV (505 aa). Residues 354–390 adopt a coiled-coil conformation; sequence EKSSMERLLTEKNAVIESLQEQVNNAKEKIVRLMSAE. Disordered regions lie at residues 422–545, 557–724, and 769–792; these read AQGP…SSVI, GLGP…PEQW, and SSSD…LASW. Positions 443 to 454 are enriched in polar residues; that stretch reads SQCTSGPSSYAQ. A compositionally biased stretch (basic and acidic residues) spans 468 to 484; sequence GKEEKISDSKDFSDHLD. The span at 486-496 shows a compositional bias: polar residues; sequence GCSQKPWTEQS. Positions 523–545 are enriched in basic and acidic residues; that stretch reads QRQRHLENSEEPPERRSRVSSVI. Polar residues predominate over residues 563–581; sequence SLSTAPSCHQQTWKNSAAF. Over residues 599 to 610 the composition is skewed to basic residues; sequence VRRRRAAQRARS. Residues 639-651 are compositionally biased toward polar residues; sequence NGDSPSLAPQTTD. Residues 769–780 show a composition bias toward low complexity; the sequence is SSSDSSDSGTSD.

Belongs to the G-protein coupled receptor 3 family. GABA-B receptor subfamily. Ubiquitous expression both in the CNS and in peripheral tissues. Very high expression in fetal brain and testis relative to expression in other tissues.

The protein resides in the cell membrane. Orphan G-protein coupled receptor involved in the regulation of hair cell orientation in mechanosensory organs of the inner ear. It is required to trigger a 180 degree reversal in hair cell orientation, creating a virtual line of polarity reversal (LPR) across which stereociliary bundles are arranged in opposite orientations. The polypeptide is Probable G-protein coupled receptor 156 (GPR156) (Homo sapiens (Human)).